The sequence spans 361 residues: MNESRWTEWRILNMSSSIVNVSEHHSCPLGFGHYSVEDVCIFETVVIVLLTFLIISGNLTVIFVFHCAPLLHHYTTSYFIQTMAYADLLVGVTCLVPTLSLLHYSTGVHESLTCQVFGYIISVLKSVSMACLACISVDRYLAITKPLSYNQLVTPCRLRICIIMIWIYSCLIFLPSFFGWGKPGYHGDIFEWCATSWLTSAYFTCFIVCLLYAPAALVVCFTYFHIFKICRQHTKEINDRRARFPSHEVEASREAGHSPDRRYAMVLFRITSVFYMLWLPYIIYFLLESSRVLDNPTLSFLTTWLAISNSFCNCVIYSLSNSVFRLGLRRLSETMCTSCVCAKDQEAQDPKPRRRANSCSI.

Residues 1–44 (MNESRWTEWRILNMSSSIVNVSEHHSCPLGFGHYSVEDVCIFET) are Extracellular-facing. N-linked (GlcNAc...) asparagine glycans are attached at residues N2, N13, and N20. A helical membrane pass occupies residues 45 to 65 (VVIVLLTFLIISGNLTVIFVF). Residues 66–81 (HCAPLLHHYTTSYFIQ) are Cytoplasmic-facing. Residues 82 to 102 (TMAYADLLVGVTCLVPTLSLL) form a helical membrane-spanning segment. Over 103 to 115 (HYSTGVHESLTCQ) the chain is Extracellular. C114 and C193 form a disulfide bridge. The helical transmembrane segment at 116–136 (VFGYIISVLKSVSMACLACIS) threads the bilayer. At 137-159 (VDRYLAITKPLSYNQLVTPCRLR) the chain is on the cytoplasmic side. Residues 160–180 (ICIIMIWIYSCLIFLPSFFGW) form a helical membrane-spanning segment. Residues 181-205 (GKPGYHGDIFEWCATSWLTSAYFTC) lie on the Extracellular side of the membrane. The chain crosses the membrane as a helical span at residues 206 to 226 (FIVCLLYAPAALVVCFTYFHI). Residues 227 to 265 (FKICRQHTKEINDRRARFPSHEVEASREAGHSPDRRYAM) are Cytoplasmic-facing. Residues 266–286 (VLFRITSVFYMLWLPYIIYFL) traverse the membrane as a helical segment. Over 287–296 (LESSRVLDNP) the chain is Extracellular. A helical membrane pass occupies residues 297–317 (TLSFLTTWLAISNSFCNCVIY). The Cytoplasmic portion of the chain corresponds to 318–361 (SLSNSVFRLGLRRLSETMCTSCVCAKDQEAQDPKPRRRANSCSI).

It belongs to the G-protein coupled receptor 1 family. Expressed in brain, especially in striatum. Expressed in the striatum, nucleus accumbens, and lateral globus pallidus.

It is found in the cell membrane. In terms of biological role, G- protein coupled receptor activated by antipsychotics reserpine leading to an increase in intracellular cAMP and its internalization. May play a role in locomotor activity through modulation of dopamine, NMDA and ADORA2A-induced locomotor activity. These behavioral changes are accompanied by modulation of the dopamine receptor signaling pathway in striatum. Modulates HTT level via cAMP-dependent but PKA independent mechanisms throught activation of RAB39B that translocates HTT to the endoplasmic reticulum, thus avoiding proteasome degradation. The sequence is that of G-protein coupled receptor 52 from Mus musculus (Mouse).